A 700-amino-acid chain; its full sequence is Interleukin-1 receptor accessory protein-like 1-B (700 aa).

A signal peptide spans 1–18; sequence MRSRVPLQILLYAAVIRS. Topologically, residues 19–357 are extracellular; sequence LKVVSKRGSV…QLSRRELMYT (339 aa). The 103-residue stretch at 32–134 folds into the Ig-like C2-type 1 domain; sequence TDWSVDYLRY…YCMKVSMALT (103 aa). C53 and C118 are disulfide-bonded. 6 N-linked (GlcNAc...) asparagine glycosylation sites follow: N63, N122, N138, N213, N264, and N331. 2 Ig-like C2-type domains span residues 143 to 232 and 242 to 350; these read CYNS…TELT and PKIL…IQLS. C164 and C216 are oxidised to a cystine. A disulfide bond links C267 and C334. Residues 358-378 traverse the membrane as a helical segment; the sequence is VELAGGLGAILLMLIFLVSLY. The Cytoplasmic portion of the chain corresponds to 379-700; sequence KCYRIELMLF…RETSISSVIW (322 aa). The TIR domain maps to 403–559; sequence KDYDAYVSYT…RFWKQLQYEM (157 aa). E491 is an active-site residue. Residues 564–700 are required for synaptic vesicle accumulation during synaptogenesis; sequence PEPKLSHEQV…RETSISSVIW (137 aa).

The protein belongs to the interleukin-1 receptor family.

The protein resides in the cell membrane. The protein localises to the cytoplasm. The enzyme catalyses NAD(+) + H2O = ADP-D-ribose + nicotinamide + H(+). In terms of biological role, may regulate secretion and presynaptic differentiation through inhibition of the activity of N-type voltage-gated calcium channel. During presynaptic differentiation may regulate both synaptic vesicle accumulation in axon terminals and subsequent axon terminal remodeling. This Danio rerio (Zebrafish) protein is Interleukin-1 receptor accessory protein-like 1-B (il1rapl1b).